The sequence spans 526 residues: MDCHTKETLGVTQWRRSTMLTLSLLYAITPADGAKEALEYKTWTNHCGLAATLRKVAGGVLTKLKSHISYRKKLEEMETKLRIYALKGDGVGEQKSAEILATTAALMRQKALTPEEANLKTALKAAGFAGEGAAAVSSYLMTLGTLTTSGSAHCLSNEGGDGDGKDQLAPKGCRHGTEADFDAGAGPAESEVADSGFAQVPGKQDGANAGQANMCALFTHQATPHSSQGIYITGAQTKPSFGYGMLTIGTTDQTIGLKLSDIKGKQADSAQKFWSSCHAAVKAAQDMKADPALKVDQTLLAVLVASPEMAEILKLEAAASQQKGPEEVTIDLATEKNNYFGTNNNKLEPLWTKIKGQNIVDLAATKGSTKELGTVTDTAELQKLLSYYYTVNKEEQKKTAEKITKLETELADQKGKSPESECNKISEEPKCNEDKICSWHKEVKAGEKHCKFNSTKAKEKGVSVTQTQTAGGTEATTDKCKGKLEDTCKKESNCKWENNACKDSSILVTKKFALTVVSAAFVALLF.

Residues 1–33 (MDCHTKETLGVTQWRRSTMLTLSLLYAITPADG) form the signal peptide. 2 disulfides stabilise this stretch: cysteine 47–cysteine 173 and cysteine 154–cysteine 215. A disordered region spans residues 157–193 (NEGGDGDGKDQLAPKGCRHGTEADFDAGAGPAESEVA). Asparagine 453 carries N-linked (GlcNAc...) asparagine glycosylation. Aspartate 503 is lipidated: GPI-anchor amidated aspartate. Residues 504 to 526 (SSILVTKKFALTVVSAAFVALLF) constitute a propeptide, removed in mature form.

Its subcellular location is the cell membrane. VSG forms a coat on the surface of the parasite. The trypanosome evades the immune response of the host by expressing a series of antigenically distinct VSGs from an estimated 1000 VSG genes. In Trypanosoma brucei brucei, this protein is Variant surface glycoprotein MITAT 1.4A.